Reading from the N-terminus, the 266-residue chain is Putative peptidyl-prolyl cis-trans isomerase NifM (266 aa).

Residues 124–221 (PEQRLTRHLL…LGWHLLWCEA (98 aa)) form the PpiC domain.

Belongs to the PpiC/parvulin rotamase family.

The catalysed reaction is [protein]-peptidylproline (omega=180) = [protein]-peptidylproline (omega=0). In terms of biological role, required for the activation and stabilization of the iron-component (NifH) of nitrogenase. Probable PPIase. This chain is Putative peptidyl-prolyl cis-trans isomerase NifM (nifM), found in Klebsiella oxytoca.